We begin with the raw amino-acid sequence, 498 residues long: MHTHNNFKTPSDEDELDDLDEDMVVGVIAEIEQEVLNESDSDNDEYDLVDMGAPVPDNDGDISYEGNDSSSSDDSFDPNAADSDSDDSMLDEAGGVTAGGATSAKKRKDDDNPSGSNKQPEATFDLDEDDETDETVRAMIAAIKKPRSSPPEIKLEDFITDICFHPDRDIIALATIIGDVHLYEYDNEANKLLRTIEVHSKACRDVEFTEDGRFLLTCSKDKCVMVTDMETEKLKKLYETAHDDAINTLHVLNENLFASGDDAGTVKLWDLRTKNAIFELKELEDQITQLTTNEQSKLLLATSADGYLTTFNISARKMYVQSEPYEEELNCMGVYRGDSKLVVGTSKGRLYTYNWGQFGYHCDMYPGIKSPISLMIPITDRIACVAGEDGNIRACHIAPYRNLGVVGQHNMPIESLDVNASGELIASSSHNNDVRFWNVKYFEDFGDIKYNEKHNAYKEQRHNLPSSKCSNASDFFSDLTKENADGDDDPGAGPSNMA.

The tract at residues Met-1–Glu-131 is disordered. 2 stretches are compositionally biased toward acidic residues: residues Asp-12–Met-23 and Ile-31–Leu-48. 2 stretches are compositionally biased toward low complexity: residues Asn-67 to Asp-82 and Ala-93 to Ser-103. 6 WD repeats span residues Lys-154–Leu-193, Val-198–Leu-237, Ala-241–Glu-279, Glu-282–Gln-321, Pro-324–Asp-363, and Gln-408–Asp-447. Positions Asp-478–Ala-498 are disordered.

Belongs to the WD repeat WDR55 family.

This is WD repeat-containing protein 55 homolog from Drosophila melanogaster (Fruit fly).